Reading from the N-terminus, the 411-residue chain is Epoxyqueuosine reductase (411 aa).

Catalysis depends on aspartate 171, which acts as the Proton donor. The region spanning 213–245 (LPLPVDKPQEEQCGRCVACMTTCPTGAIVAPYT) is the 4Fe-4S ferredoxin-type domain. Residues cysteine 225, cysteine 228, cysteine 231, cysteine 235, cysteine 251, cysteine 278, cysteine 281, and cysteine 285 each coordinate [4Fe-4S] cluster.

The protein belongs to the QueG family. Monomer. Cob(II)alamin serves as cofactor. The cofactor is [4Fe-4S] cluster.

Its subcellular location is the cytoplasm. The enzyme catalyses epoxyqueuosine(34) in tRNA + AH2 = queuosine(34) in tRNA + A + H2O. The protein operates within tRNA modification; tRNA-queuosine biosynthesis. In terms of biological role, catalyzes the conversion of epoxyqueuosine (oQ) to queuosine (Q), which is a hypermodified base found in the wobble positions of tRNA(Asp), tRNA(Asn), tRNA(His) and tRNA(Tyr). The chain is Epoxyqueuosine reductase from Yersinia pestis.